Reading from the N-terminus, the 189-residue chain is Peptide deformylase (189 aa).

Fe cation contacts are provided by cysteine 98 and histidine 140. Glutamate 141 is a catalytic residue. Histidine 144 provides a ligand contact to Fe cation.

The protein belongs to the polypeptide deformylase family. Requires Fe(2+) as cofactor.

It catalyses the reaction N-terminal N-formyl-L-methionyl-[peptide] + H2O = N-terminal L-methionyl-[peptide] + formate. Functionally, removes the formyl group from the N-terminal Met of newly synthesized proteins. Requires at least a dipeptide for an efficient rate of reaction. N-terminal L-methionine is a prerequisite for activity but the enzyme has broad specificity at other positions. The protein is Peptide deformylase of Porphyromonas gingivalis (strain ATCC 33277 / DSM 20709 / CIP 103683 / JCM 12257 / NCTC 11834 / 2561).